We begin with the raw amino-acid sequence, 237 residues long: Corrinoid adenosyltransferase MMAB (237 aa).

A mitochondrion-targeting transit peptide spans 1 to 26; the sequence is MAVWLFGGRLGLRGRLSACRLLCPRF. The disordered stretch occupies residues 30-49; sequence GPQGGEDGDRLQPSSTAAKI. ATP-binding positions include 54–57, 62–63, and Lys72; these read TKTG and SS. A Phosphoserine modification is found at Ser128. Residue 184-188 participates in ATP binding; that stretch reads RRAER. Lys205 carries the post-translational modification N6-succinyllysine. Asn208 contacts ATP. Position 224 is an N6-acetyllysine; alternate (Lys224). Lys224 carries the post-translational modification N6-succinyllysine; alternate.

It belongs to the Cob(I)alamin adenosyltransferase family. In terms of assembly, homotrimer.

It localises to the mitochondrion. It catalyses the reaction cob(I)alamin-[corrinoid adenosyltransferase] + ATP = apo-[corrinoid adenosyltransferase] + adenosylcob(III)alamin + triphosphate. Converts cob(I)alamin to adenosylcobalamin (adenosylcob(III)alamin), a coenzyme for methylmalonyl-CoA mutase, therefore participates in the final step of the vitamin B12 conversion. Generates adenosylcobalamin (AdoCbl) and directly delivers the cofactor to MUT in a transfer that is stimulated by ATP-binding to MMAB and gated by MMAA. The protein is Corrinoid adenosyltransferase MMAB of Mus musculus (Mouse).